Consider the following 377-residue polypeptide: Spermidine/putrescine import ATP-binding protein PotA (377 aa).

Residues 22-252 (VRLQNVTKRF…PANRFVADFI (231 aa)) enclose the ABC transporter domain. Residue 54–61 (GPSGCGKT) coordinates ATP.

This sequence belongs to the ABC transporter superfamily. Spermidine/putrescine importer (TC 3.A.1.11.1) family. As to quaternary structure, the complex is composed of two ATP-binding proteins (PotA), two transmembrane proteins (PotB and PotC) and a solute-binding protein (PotD).

Its subcellular location is the cell membrane. The enzyme catalyses ATP + H2O + polyamine-[polyamine-binding protein]Side 1 = ADP + phosphate + polyamineSide 2 + [polyamine-binding protein]Side 1.. Its function is as follows. Part of the ABC transporter complex PotABCD involved in spermidine/putrescine import. Responsible for energy coupling to the transport system. The sequence is that of Spermidine/putrescine import ATP-binding protein PotA from Rubrobacter xylanophilus (strain DSM 9941 / JCM 11954 / NBRC 16129 / PRD-1).